A 360-amino-acid chain; its full sequence is Outer mitochondrial transmembrane helix translocase (360 aa).

Residues 1–15 (MVHGEAFSRPLSRNE) lie on the Mitochondrial intermembrane side of the membrane. The helical transmembrane segment at 16–34 (VVGLIFRLTIFGAVTYFTI) threads the bilayer. Residues 35–360 (KWMVDAIDPT…QNVLMHVSLD (326 aa)) are Cytoplasmic-facing. Residue 133-140 (GPPGCGKT) participates in ATP binding.

Belongs to the AAA ATPase family. MSP1 subfamily.

It localises to the mitochondrion outer membrane. The protein localises to the peroxisome membrane. It is found in the postsynaptic cell membrane. It carries out the reaction [protein]-with a C-terminal TM segment(out) + ATP + H2O = [protein]-with a C-terminal TM segment(in) + ADP + phosphate + H(+). Outer mitochondrial translocase required to remove mislocalized tail-anchored transmembrane proteins on mitochondria. Specifically recognizes and binds tail-anchored transmembrane proteins: acts as a dislocase that mediates the ATP-dependent extraction of mistargeted tail-anchored transmembrane proteins from the mitochondrion outer membrane. Also plays a critical role in regulating the surface expression of AMPA receptors (AMPAR), thereby regulating synaptic plasticity and learning and memory. The protein is Outer mitochondrial transmembrane helix translocase of Xenopus tropicalis (Western clawed frog).